Consider the following 130-residue polypeptide: Lysozyme C (130 aa).

One can recognise a C-type lysozyme domain in the interval 1–130; that stretch reads KTYERCELAR…VSPWIRDCGL (130 aa). 4 cysteine pairs are disulfide-bonded: cysteine 6-cysteine 128, cysteine 30-cysteine 116, cysteine 65-cysteine 81, and cysteine 77-cysteine 95. Active-site residues include glutamate 35 and aspartate 53.

The protein belongs to the glycosyl hydrolase 22 family. As to quaternary structure, monomer.

The protein resides in the secreted. It carries out the reaction Hydrolysis of (1-&gt;4)-beta-linkages between N-acetylmuramic acid and N-acetyl-D-glucosamine residues in a peptidoglycan and between N-acetyl-D-glucosamine residues in chitodextrins.. In terms of biological role, lysozymes have primarily a bacteriolytic function; those in tissues and body fluids are associated with the monocyte-macrophage system and enhance the activity of immunoagents. This Chelonia mydas (Green sea-turtle) protein is Lysozyme C (LYZ).